Reading from the N-terminus, the 61-residue chain is Conotoxin Bt5.1 (61 aa).

The first 22 residues, 1-22 (MRGLPVFVILLLLIASEPSVDA), serve as a signal peptide directing secretion. Positions 23–48 (RPKTKADVPLTSLNDNAKRTLQILRN) are excised as a propeptide.

Belongs to the conotoxin T superfamily. In terms of processing, contains 2 disulfide bonds that can be either 'C1-C3, C2-C4' or 'C1-C4, C2-C3', since these disulfide connectivities have been observed for conotoxins with cysteine framework V (for examples, see AC P0DQQ7 and AC P81755). As to expression, expressed by the venom duct.

The protein localises to the secreted. The sequence is that of Conotoxin Bt5.1 from Conus betulinus (Beech cone).